A 271-amino-acid chain; its full sequence is 3-methyl-2-oxobutanoate hydroxymethyltransferase (271 aa).

Residues Asp44 and Asp83 each coordinate Mg(2+). 3-methyl-2-oxobutanoate-binding positions include 44-45 (DS), Asp83, and Lys112. Residue Glu114 participates in Mg(2+) binding. The active-site Proton acceptor is Glu181.

Belongs to the PanB family. Homodecamer; pentamer of dimers. Requires Mg(2+) as cofactor.

Its subcellular location is the cytoplasm. The catalysed reaction is 3-methyl-2-oxobutanoate + (6R)-5,10-methylene-5,6,7,8-tetrahydrofolate + H2O = 2-dehydropantoate + (6S)-5,6,7,8-tetrahydrofolate. It participates in cofactor biosynthesis; coenzyme A biosynthesis. Catalyzes the reversible reaction in which hydroxymethyl group from 5,10-methylenetetrahydrofolate is transferred onto alpha-ketoisovalerate to form ketopantoate. The chain is 3-methyl-2-oxobutanoate hydroxymethyltransferase from Staphylothermus marinus (strain ATCC 43588 / DSM 3639 / JCM 9404 / F1).